A 927-amino-acid polypeptide reads, in one-letter code: Non-lysosomal glucosylceramidase (927 aa).

Residues 32-62 (EETGGTKDVQVTDCKSPEDSRPPKETDCCNP) are disordered. Basic and acidic residues predominate over residues 46–58 (KSPEDSRPPKETD).

Belongs to the non-lysosomal glucosylceramidase family. Widely expressed. Mainly expressed in brain, heart, skeletal muscle, kidney and placenta and expressed at lower levels in liver, spleen, small intestine and lung. Detectable in colon, thymus and peripheral blood leukocytes.

It is found in the endoplasmic reticulum membrane. Its subcellular location is the golgi apparatus membrane. It carries out the reaction a beta-D-glucosyl-(1&lt;-&gt;1')-N-acylsphing-4-enine + H2O = an N-acylsphing-4-enine + D-glucose. The enzyme catalyses a beta-D-galactosyl-(1&lt;-&gt;1')-N-acylsphing-4-enine + H2O = an N-acylsphing-4-enine + D-galactose. It catalyses the reaction beta-D-glucosyl-(1-&gt;3)-O-lithocholate + H2O = lithocholate + D-glucose. The catalysed reaction is beta-D-glucosyl-(1-&gt;3)-O-chenodeoxycholate + H2O = chenodeoxycholate + D-glucose. It carries out the reaction a di-trans,poly-cis-dolichyl beta-D-glucosyl phosphate + chenodeoxycholate = beta-D-glucosyl-(1-&gt;3)-O-chenodeoxycholate + a di-trans,poly-cis-dolichyl phosphate + H(+). The enzyme catalyses octyl beta-D-glucose + chenodeoxycholate = beta-D-glucosyl-(1-&gt;3)-O-chenodeoxycholate + octan-1-ol. It catalyses the reaction cholesteryl 3-beta-D-glucoside + H2O = cholesterol + D-glucose. The catalysed reaction is a beta-D-glucosyl-(1&lt;-&gt;1')-N-acylsphing-4-enine + cholesterol = cholesteryl 3-beta-D-glucoside + an N-acylsphing-4-enine. It carries out the reaction beta-D-glucosyl-N-(9Z-octadecenoyl)-sphing-4E-enine + cholesterol = N-(9Z-octadecenoyl)-sphing-4-enine + cholesteryl 3-beta-D-glucoside. The enzyme catalyses a beta-D-galactosyl-(1&lt;-&gt;1')-N-acylsphing-4-enine + cholesterol = cholesteryl 3-beta-D-galactoside + an N-acylsphing-4-enine. It catalyses the reaction 1-(beta-D-galactosyl)-N-dodecanoylsphing-4-enine + cholesterol = cholesteryl 3-beta-D-galactoside + N-dodecanoylsphing-4-enine. The protein operates within lipid metabolism; sphingolipid metabolism. It participates in steroid metabolism; cholesterol metabolism. Inhibited by AMP-DMN/N -((5-adamantane-1-yl-methoxy)pentyl)-deoxynojirimycin. Activated by Mn(2+), Co(2+) and Mg(2+) and inhibited by Zn(2+). Enzymatic activity is dependent on membrane association and requires the presence of lipids. The membrane-associated enzyme is not inhibited by condutiriol B epoxide and bromocondutiriol B epoxide. Non-lysosomal glucosylceramidase that catalyzes the hydrolysis of glucosylceramides/GlcCers (such as beta-D-glucosyl-(1&lt;-&gt;1')-N-acylsphing-4-enine) to free glucose and ceramides (such as N-acylsphing-4-enine). GlcCers are membrane glycosphingolipids that have a wide intracellular distribution. They are the main precursors of more complex glycosphingolipids that play a role in cellular growth, differentiation, adhesion, signaling, cytoskeletal dynamics and membrane properties. Involved in the transglucosylation of cholesterol, transfers glucose from GlcCer to cholesterol, thereby modifying its water solubility and biological properties. Under specific conditions, may catalyze the reverse reaction, transferring glucose from cholesteryl-3-beta-D-glucoside to ceramide (such as N-acylsphing-4-enine). May play a role in the metabolism of bile acids. Able to hydrolyze bile acid 3-O-glucosides as well as to produce bile acid-glucose conjugates thanks to a bile acid glucosyl transferase activity. Catalyzes the hydrolysis of galactosylceramides/GalCers (such as beta-D-galactosyl-(1&lt;-&gt;1')-N-acylsphing-4-enine), as well as the galactosyl transfer between GalCers and cholesterol in vitro with lower activity compared with their activity against GlcCers. This chain is Non-lysosomal glucosylceramidase, found in Homo sapiens (Human).